The sequence spans 179 residues: Laminin-binding fimbrial subunit ElfA (179 aa).

The N-terminal stretch at 1–21 (MKKSVLTAFITVVCATSSVMA) is a signal peptide.

The protein belongs to the fimbrial protein family.

The protein resides in the fimbrium. Its function is as follows. Part of the elfADCG fimbrial operon, which could be required for adherence to host epithelial cells. ElfA is an accessory colonization factor that contributes to adherence of bacteria to human intestinal epithelial cells and to animal intestinal tissue in vitro. Binds specifically to laminin, but not to fibronectin or collagen type IV. The polypeptide is Laminin-binding fimbrial subunit ElfA (elfA) (Escherichia coli O157:H7).